The primary structure comprises 536 residues: Phosphoenolpyruvate carboxykinase (ATP) (536 aa).

Substrate is bound by residues Arg-61, Tyr-195, and Lys-201. Residues Lys-201, His-220, and 236–244 contribute to the ATP site; that span reads GLSGTGKTT. Mn(2+) contacts are provided by Lys-201 and His-220. Asp-257 is a binding site for Mn(2+). ATP-binding residues include Glu-285, Arg-322, and Thr-447. Arg-322 serves as a coordination point for substrate.

This sequence belongs to the phosphoenolpyruvate carboxykinase (ATP) family. It depends on Mn(2+) as a cofactor.

It localises to the cytoplasm. It carries out the reaction oxaloacetate + ATP = phosphoenolpyruvate + ADP + CO2. Its pathway is carbohydrate biosynthesis; gluconeogenesis. In terms of biological role, involved in the gluconeogenesis. Catalyzes the conversion of oxaloacetate (OAA) to phosphoenolpyruvate (PEP) through direct phosphoryl transfer between the nucleoside triphosphate and OAA. The polypeptide is Phosphoenolpyruvate carboxykinase (ATP) (Brucella melitensis biotype 1 (strain ATCC 23456 / CCUG 17765 / NCTC 10094 / 16M)).